Consider the following 802-residue polypeptide: Vacuolar membrane protease (802 aa).

At 1 to 13 the chain is on the cytoplasmic side; that stretch reads MARYNPLAFTSGP. A helical transmembrane segment spans residues 14 to 34; it reads VVFFITITYTALLIALLLTHL. At 35-357 the chain is on the vacuolar side; the sequence is TLPSYPSHPP…KVFIVFQLHT (323 aa). N-linked (GlcNAc...) asparagine glycans are attached at residues Asn48, Asn102, Asn105, and Asn112. Zn(2+) is bound by residues His152 and Asp164. Glu198 functions as the Proton acceptor in the catalytic mechanism. Zn(2+) is bound by residues Glu199, Glu224, and His297. The helical transmembrane segment at 358–378 threads the bilayer; the sequence is FFALCVTLLVVAPLTLIGLAW. Residues 379-389 are Cytoplasmic-facing; sequence SLHKADRNYLF. Residues 390–409 form a helical membrane-spanning segment; that stretch reads ARKAFVYSADDDEPIHLYGW. The Vacuolar segment spans residues 410-423; sequence RGFFRFPIAFGIAT. The helical transmembrane segment at 424–444 threads the bilayer; sequence SIVVGLAMMLSAWFAVSWFLL. Residues 445-457 lie on the Cytoplasmic side of the membrane; sequence HGADAMRPSALQR. The helical transmembrane segment at 458–478 threads the bilayer; sequence MYSLLWLFIGSFCLLVFFTIL. The Vacuolar portion of the chain corresponds to 479-490; it reads ANNHQVAAGYPS. A helical membrane pass occupies residues 491 to 511; sequence LFCFATVFLANVLSFLELFLA. Residues 512 to 609 lie on the Cytoplasmic side of the membrane; sequence PPKSAYAWNV…EQEWSGKLPS (98 aa). Disordered stretches follow at residues 528 to 554 and 570 to 603; these read GSRP…ATET and AGRR…EQEW. Residues 610-630 form a helical membrane-spanning segment; it reads WIWIVQFSLLAPMIVILVGQI. The Vacuolar segment spans residues 631–649; the sequence is ALLLTSALYQTPSDGNSPL. A helical transmembrane segment spans residues 650 to 670; that stretch reads YIYTSIAALAVFLVAPIGPFI. The Cytoplasmic portion of the chain corresponds to 671–677; that stretch reads HRFTHHV. A helical membrane pass occupies residues 678–698; the sequence is PTFLFLLCVATTIYNLVAFPF. Residues 699–802 are Vacuolar-facing; it reads SEQHKLKVYF…HDDSNNRGRR (104 aa). Residues Asn746 and Asn779 are each glycosylated (N-linked (GlcNAc...) asparagine).

It belongs to the peptidase M28 family. It depends on Zn(2+) as a cofactor.

The protein localises to the vacuole membrane. Its function is as follows. May be involved in vacuolar sorting and osmoregulation. This Leptosphaeria maculans (strain JN3 / isolate v23.1.3 / race Av1-4-5-6-7-8) (Blackleg fungus) protein is Vacuolar membrane protease.